The chain runs to 135 residues: Protein PilG (135 aa).

A Response regulatory domain is found at 9–125 (KVMVIDDSKT…ELLGAIKAHV (117 aa)). Asp58 is modified (4-aspartylphosphate).

In terms of processing, phosphorylated.

Its function is as follows. Plays an essential role in both cAMP-dependent and independent regulation of twitching motility. Regulates the cAMP-independent coordination of type IV pilus (T4P) biogenesis and retraction that plays a role in surface and host cell adhesion, colonization, biofilm maturation, virulence, and twitching. In addition, phosphorylated PilG is necessary for cAMP production via regulation of the adenylate cyclase CyaB. Acts therefore as a response regulator of the chemosensory system/Chp system. The sequence is that of Protein PilG (pilG) from Pseudomonas aeruginosa (strain ATCC 15692 / DSM 22644 / CIP 104116 / JCM 14847 / LMG 12228 / 1C / PRS 101 / PAO1).